The chain runs to 357 residues: MKIVVLAGGRSTERNVSISSGYRITNALRQKGQQATFIDLFLGYDLEGKTVEQVFDDANTSKDLNISDAILTDEDINKLRPDGSTQLFGPNVMAICKAADIVFLALHGGDGENGKVQAVFDINGVKYTGSGPLASGITMNKVFSKEVMLYHGIQTSGFKEFKRDQGPKQTVPFDFPVVVKPTSGGSSVGTHIIHNQEELESGLEDVFRFDNSAIVEEFTPGREFSLGVVNGHAYSAIEIKVRSGWYDFKHKFQAGYTDFITPPKDLDEDVHQAMKDVAVQTMDVLGLQNYGRIDFFANEKGVWVIEANNLPGMTPLSLLPQEAEADGVDYGDLVMDIVNGKLKLYADGMTEAGLLTK.

One can recognise an ATP-grasp domain in the interval K145–N339. P172 to S225 provides a ligand contact to ATP. Mg(2+) contacts are provided by D294, E306, and N308.

The protein belongs to the D-alanine--D-alanine ligase family. It depends on Mg(2+) as a cofactor. Mn(2+) is required as a cofactor.

The protein resides in the cytoplasm. The enzyme catalyses 2 D-alanine + ATP = D-alanyl-D-alanine + ADP + phosphate + H(+). Its pathway is cell wall biogenesis; peptidoglycan biosynthesis. Functionally, cell wall formation. This is D-alanine--D-alanine ligase from Lacticaseibacillus paracasei (strain ATCC 334 / BCRC 17002 / CCUG 31169 / CIP 107868 / KCTC 3260 / NRRL B-441) (Lactobacillus paracasei).